Consider the following 209-residue polypeptide: Glutathione S-transferase 1-1 (209 aa).

The region spanning 1-81 (MADFYYLPGS…YLVEKYGKTD (81 aa)) is the GST N-terminal domain. Glutathione contacts are provided by residues serine 10, 51–53 (HTI), and 65–67 (ESR). In terms of domain architecture, GST C-terminal spans 87 to 209 (CPKKRAVINQ…GCLEFKKFFE (123 aa)).

It belongs to the GST superfamily. Theta family. As to quaternary structure, homodimer.

It carries out the reaction RX + glutathione = an S-substituted glutathione + a halide anion + H(+). It catalyses the reaction 1,1,1-trichloro-2,2-bis(4-chlorophenyl)ethane = 1,1-dichloro-2,2-bis(4-chlorophenyl)ethylene + chloride + H(+). Functionally, conjugation of reduced glutathione to a wide number of exogenous and endogenous hydrophobic electrophiles. Has DDT dehydrochlorinase activity. The polypeptide is Glutathione S-transferase 1-1 (GstD1) (Drosophila sechellia (Fruit fly)).